The sequence spans 366 residues: MIVTETIIRFENVTKQFDNDPPVLDNVSFEIEKGKFYTLLGPSGCGKTTILRLIAGFLEASKGQIYLGDKVINQIPANKRPVNTVFQDYALFPHLNVYENVAFGLRIKKLKKEAIDEKVKEALRFVNLKGYEKREISEMSGGQRQRVAIARAIVNEPEVILLDEPLSALDLKLRTEMQYELRDLQKRLGITFIFVTHDQEEALAMSDEIFVLNKGEIQQSGTPIDIYDEPINKFVADFIGESNIVNGKMIQDFEVEFVERRFECVDQGFRPNEVVEVVIRPEDLEITSAEKGQLQVTVDWMLFRGVHYEVGCIDIDGNEWLVHTTRKVRVGDKIGLAFEPEAIHVMRLGETEEEFDKRLDSYDEVQ.

The region spanning 8–239 is the ABC transporter domain; sequence IRFENVTKQF…PINKFVADFI (232 aa). 41–48 lines the ATP pocket; sequence GPSGCGKT.

The protein belongs to the ABC transporter superfamily. Spermidine/putrescine importer (TC 3.A.1.11.1) family. The complex is composed of two ATP-binding proteins (PotA), two transmembrane proteins (PotB and PotC) and a solute-binding protein (PotD).

Its subcellular location is the cell membrane. The enzyme catalyses ATP + H2O + polyamine-[polyamine-binding protein]Side 1 = ADP + phosphate + polyamineSide 2 + [polyamine-binding protein]Side 1.. Part of the ABC transporter complex PotABCD involved in spermidine/putrescine import. Responsible for energy coupling to the transport system. This is Spermidine/putrescine import ATP-binding protein PotA from Listeria monocytogenes serovar 1/2a (strain ATCC BAA-679 / EGD-e).